The following is a 184-amino-acid chain: Guanylate kinase (184 aa).

The 179-residue stretch at 5–183 (KKLIIITGPS…TVKEVLKIIK (179 aa)) folds into the Guanylate kinase-like domain. 12 to 19 (GPSGVGKG) is an ATP binding site.

Belongs to the guanylate kinase family.

Its subcellular location is the cytoplasm. It carries out the reaction GMP + ATP = GDP + ADP. In terms of biological role, essential for recycling GMP and indirectly, cGMP. The chain is Guanylate kinase from Prochlorococcus marinus subsp. pastoris (strain CCMP1986 / NIES-2087 / MED4).